The chain runs to 514 residues: Pleiotropic regulator 1 (514 aa).

The residue at position 1 (M1) is an N-acetylmethionine. Phosphoserine is present on S119. The interval 135-160 (KADANRTAPSGSEYRHPGASDRPQPT) is disordered. A Phosphoserine modification is found at S201. WD repeat units lie at residues 202 to 241 (GHLG…LKLS), 244 to 283 (GHIS…VIRH), 286 to 325 (GHLS…SVHT), 328 to 367 (GHTN…TRVT), 370 to 410 (NHKK…QNLS), 411 to 449 (GHNA…NFQR), and 460 to 499 (DSES…TEET). Residue S391 is modified to Phosphoserine.

It belongs to the WD repeat PRL1/PRL2 family. In terms of assembly, identified in the spliceosome C complex. Component of the PRP19-CDC5L splicing complex composed of a core complex comprising a homotetramer of PRPF19, CDC5L, PLRG1 and BCAS2, and at least three less stably associated proteins CTNNBL1, CWC15 and HSPA8. Interacts (via its WD40 repeat domain) directly with CDC5L (via its C-terminal); the interaction is required for mRNA splicing but not for spliceosome assembly. Component of the minor spliceosome, which splices U12-type introns. Within this complex, interacts with CRIPT. Also interacts directly in the complex with BCAS2 and PRPF19. Interacts with USB1.

The protein localises to the nucleus. Its subcellular location is the nucleus speckle. Its function is as follows. Involved in pre-mRNA splicing as component of the spliceosome. Component of the PRP19-CDC5L complex that forms an integral part of the spliceosome and is required for activating pre-mRNA splicing. As a component of the minor spliceosome, involved in the splicing of U12-type introns in pre-mRNAs. This chain is Pleiotropic regulator 1 (PLRG1), found in Homo sapiens (Human).